The chain runs to 378 residues: Alginate lyase (378 aa).

An N-terminal signal peptide occupies residues 1–28 (MQTPKLIRPTLLSMAILSSMAWATGASA). Residues 67–68 (SK), 140–141 (HT), and Y258 contribute to the substrate site. Residues 359 to 378 (LTKVYDPSHEKGDKGDNDGS) are disordered. Residues 364 to 378 (DPSHEKGDKGDNDGS) show a composition bias toward basic and acidic residues.

Belongs to the polysaccharide lyase 5 family.

It localises to the periplasm. It catalyses the reaction Eliminative cleavage of alginate to give oligosaccharides with 4-deoxy-alpha-L-erythro-hex-4-enuronosyl groups at their non-reducing ends and beta-D-mannuronate at their reducing end.. Functionally, catalyzes the depolymerization of alginate by cleaving the beta-1,4 glycosidic bond between two adjacent sugar residues via a beta-elimination mechanism. May serve to degrade mislocalized alginate that is trapped in the periplasmic space. The protein is Alginate lyase of Pseudomonas syringae pv. syringae (strain B728a).